The chain runs to 262 residues: Ribose-5-phosphate isomerase A (262 aa).

Substrate-binding positions include 33–36, 89–92, and 102–105; these read TGST, DGAD, and KGGG. Glu111 functions as the Proton acceptor in the catalytic mechanism. Lys129 serves as a coordination point for substrate.

This sequence belongs to the ribose 5-phosphate isomerase family. As to quaternary structure, homodimer.

The enzyme catalyses aldehydo-D-ribose 5-phosphate = D-ribulose 5-phosphate. Its pathway is carbohydrate degradation; pentose phosphate pathway; D-ribose 5-phosphate from D-ribulose 5-phosphate (non-oxidative stage): step 1/1. Catalyzes the reversible conversion of ribose-5-phosphate to ribulose 5-phosphate. In Cereibacter sphaeroides (strain ATCC 17029 / ATH 2.4.9) (Rhodobacter sphaeroides), this protein is Ribose-5-phosphate isomerase A.